Here is a 915-residue protein sequence, read N- to C-terminus: Protein MEI2-like 1 (915 aa).

Residues 1-90 (MPSDIMEQRG…NTTNGSQWES (90 aa)) form a disordered region. Basic and acidic residues predominate over residues 16–25 (HFHEDIHITS). The span at 50 to 65 (MPKSSWTSESYQLKPQ) shows a compositional bias: polar residues. Positions 66–77 (SSFSGSHPSGSP) are enriched in low complexity. Position 76 is a phosphoserine (serine 76). Residues 78-89 (NARNTTNGSQWE) are compositionally biased toward polar residues. 2 consecutive RRM domains span residues 217-290 (RTLL…YSIS) and 302-375 (GALL…PTYP). 2 disordered regions span residues 690–723 (PGRS…SSSN) and 854–915 (LFHT…LKEN). Positions 705–723 (PNERYRNLSHRRSESSSSN) are enriched in basic and acidic residues. Over residues 882 to 898 (RSSSIDNYNSFSISSVS) the composition is skewed to polar residues.

As to expression, expressed in roots, shoots, leaves, flowers and siliques.

Probable RNA-binding transcriptional activator that plays a role in meiosis and vegetative growth. May be a downstream effector of TOR signaling pathway and recruited by RAPTOR1 for TOR substrate. The protein is Protein MEI2-like 1 (ML1) of Arabidopsis thaliana (Mouse-ear cress).